The primary structure comprises 647 residues: Threonine--tRNA ligase (647 aa).

Positions 1-61 (MIKITFPDGA…EEDGSIEIVT (61 aa)) constitute a TGS domain. The segment at 240–538 (DHRKLGKELD…LIETYKGAFP (299 aa)) is catalytic. The Zn(2+) site is built by cysteine 334, histidine 385, and histidine 515.

Belongs to the class-II aminoacyl-tRNA synthetase family. As to quaternary structure, homodimer. Zn(2+) is required as a cofactor.

It is found in the cytoplasm. It carries out the reaction tRNA(Thr) + L-threonine + ATP = L-threonyl-tRNA(Thr) + AMP + diphosphate + H(+). In terms of biological role, catalyzes the attachment of threonine to tRNA(Thr) in a two-step reaction: L-threonine is first activated by ATP to form Thr-AMP and then transferred to the acceptor end of tRNA(Thr). Also edits incorrectly charged L-seryl-tRNA(Thr). This is Threonine--tRNA ligase from Streptococcus agalactiae serotype V (strain ATCC BAA-611 / 2603 V/R).